The sequence spans 236 residues: Small ribosomal subunit protein uS2c (236 aa).

It belongs to the universal ribosomal protein uS2 family.

It is found in the plastid. The protein localises to the chloroplast. This is Small ribosomal subunit protein uS2c (rps2) from Lotus japonicus (Lotus corniculatus var. japonicus).